The chain runs to 305 residues: Peroxisome biogenesis factor 2 (305 aa).

Residues 1–15 (MASRKENAKSANRVL) are Peroxisomal matrix-facing. Residues 16 to 42 (RISQLDALELNKALEQLVWSQFTQCFH) traverse the membrane as a helical segment. Residues 43 to 48 (GFKPGL) are Cytoplasmic-facing. A helical membrane pass occupies residues 49 to 74 (LARFEPEVKACLWVFLWRFTIYSKNA). The Peroxisomal matrix segment spans residues 75–98 (TVGQSVLNIKYKNDFSPNLRYQPP). Lys84 is subject to N6-acetyllysine. The chain crosses the membrane as a helical span at residues 99–125 (SKNQKIWYAVCTIGGRWLEERCYDLFR). At 126 to 133 (NHHLASFG) the chain is on the cytoplasmic side. The helical transmembrane segment at 134–160 (KVKQCVNFVIGLLKLGGLINFLIFLQR) threads the bilayer. At 161–187 (GKFATLTERLLGIHSVFCKPQNICEVG) the chain is on the peroxisomal matrix side. The helical transmembrane segment at 188–211 (FEYMNRELLWHGFAEFLIFLLPLI) threads the bilayer. At 212-305 (NVQKLKAKLS…GIEMSEVNAL (94 aa)) the chain is on the cytoplasmic side. Positions 244, 247, 259, 261, 264, 267, 280, and 283 each coordinate Zn(2+). An RING-type zinc finger spans residues 244-284 (CALCGEWPTMPHTIGCEHIFCYFCAKSSFLFDVYFTCPKCG).

The protein belongs to the pex2/pex10/pex12 family. As to quaternary structure, component of the PEX2-PEX10-PEX12 retrotranslocation channel, composed of PEX2, PEX10 and PEX12. Post-translationally, forms intramolecular and intermolecular disulfide bonds in response to reactive oxygen species (ROS), promoting higher stability.

Its subcellular location is the peroxisome membrane. It carries out the reaction [E2 ubiquitin-conjugating enzyme]-S-ubiquitinyl-L-cysteine + [acceptor protein]-L-cysteine = [E2 ubiquitin-conjugating enzyme]-L-cysteine + [acceptor protein]-S-ubiquitinyl-L-cysteine.. The catalysed reaction is S-ubiquitinyl-[E2 ubiquitin-conjugating enzyme]-L-cysteine + [acceptor protein]-L-lysine = [E2 ubiquitin-conjugating enzyme]-L-cysteine + N(6)-ubiquitinyl-[acceptor protein]-L-lysine.. It functions in the pathway protein modification; protein ubiquitination. Functionally, E3 ubiquitin-protein ligase component of a retrotranslocation channel required for peroxisome organization by mediating export of the PEX5 receptor from peroxisomes to the cytosol, thereby promoting PEX5 recycling. The retrotranslocation channel is composed of PEX2, PEX10 and PEX12; each subunit contributing transmembrane segments that coassemble into an open channel that specifically allows the passage of PEX5 through the peroxisomal membrane. PEX2 also regulates peroxisome organization by acting as a E3 ubiquitin-protein ligase. PEX2 ubiquitinates PEX5 during its passage through the retrotranslocation channel: catalyzes monoubiquitination of PEX5 at 'Cys-11', a modification that acts as a signal for PEX5 extraction into the cytosol. Required for pexophagy in response to starvation by mediating ubiquitination of peroxisomal proteins, such as PEX5 and ABCD3/PMP70. Also involved in the response to reactive oxygen species (ROS) by mediating 'Lys-48'-linked polyubiquitination and subsequent degradation of PNPLA2/ATGL, thereby regulating lipolysis. This is Peroxisome biogenesis factor 2 from Homo sapiens (Human).